Reading from the N-terminus, the 309-residue chain is Methionine synthase (309 aa).

His-201, Cys-203, Glu-224, and Cys-285 together coordinate Zn(2+).

The protein belongs to the archaeal MetE family. Requires Zn(2+) as cofactor.

Its pathway is amino-acid biosynthesis; L-methionine biosynthesis via de novo pathway. Its activity is regulated as follows. Is activated by phosphates. Functionally, catalyzes the transfer of a methyl group to L-homocysteine resulting in methionine formation. Can use methylcobalamin and methylcobinamide as methyl donors, but methylcobalamin is not considered to be the physiological substrate. It was proposed that, in vivo, a so-far-unidentified enzyme catalyzes methyltransfer from 5-methyltetrahydromethanopterin (5-CH3-H4MPT) to a corrinoid protein, and that the MetE gene product catalyzes the further transfer to L-homocysteine. Is not active with L-cysteine, coenzyme M, coenzyme B, glutathione or dithiothreitol as substrate. The sequence is that of Methionine synthase from Methanothermobacter marburgensis (strain ATCC BAA-927 / DSM 2133 / JCM 14651 / NBRC 100331 / OCM 82 / Marburg) (Methanobacterium thermoautotrophicum).